The primary structure comprises 267 residues: Putative ABC transporter permease protein MJ0413 (267 aa).

7 helical membrane-spanning segments follow: residues 18–38, 48–68, 78–98, 115–135, 136–156, 188–208, and 228–248; these read VLKI…AIYI, EAVI…GSLI, VISG…LMGY, PIPP…GEMS, MIFI…ISGV, PSIL…VVAA, and LSRM…GLVL. In terms of domain architecture, ABC transmembrane type-1 spans 71-252; it reads TIISIKRVIS…LIGLVLDRGL (182 aa).

It belongs to the binding-protein-dependent transport system permease family. CysTW subfamily.

Its subcellular location is the cell membrane. Functionally, probably part of a binding-protein-dependent transport system. Probably responsible for the translocation of the substrate across the membrane. This chain is Putative ABC transporter permease protein MJ0413, found in Methanocaldococcus jannaschii (strain ATCC 43067 / DSM 2661 / JAL-1 / JCM 10045 / NBRC 100440) (Methanococcus jannaschii).